The following is a 374-amino-acid chain: Lipoyl synthase, mitochondrial (374 aa).

A mitochondrion-targeting transit peptide spans 1–19 (MHSRSALLYRFLRPASRCF). Residues Cys103, Cys108, Cys114, Cys134, Cys138, Cys141, and Ser350 each contribute to the [4Fe-4S] cluster site. One can recognise a Radical SAM core domain in the interval 119–339 (ETGTATATIM…RLLGMEMGFR (221 aa)).

This sequence belongs to the radical SAM superfamily. Lipoyl synthase family. Requires [4Fe-4S] cluster as cofactor. In terms of tissue distribution, expressed in leaves and flowers, but not in roots. Expressed in roots, rosette leaves, cauline leaves, stems, flowers and siliques.

Its subcellular location is the mitochondrion. It carries out the reaction [[Fe-S] cluster scaffold protein carrying a second [4Fe-4S](2+) cluster] + N(6)-octanoyl-L-lysyl-[protein] + 2 oxidized [2Fe-2S]-[ferredoxin] + 2 S-adenosyl-L-methionine + 4 H(+) = [[Fe-S] cluster scaffold protein] + N(6)-[(R)-dihydrolipoyl]-L-lysyl-[protein] + 4 Fe(3+) + 2 hydrogen sulfide + 2 5'-deoxyadenosine + 2 L-methionine + 2 reduced [2Fe-2S]-[ferredoxin]. The protein operates within protein modification; protein lipoylation via endogenous pathway; protein N(6)-(lipoyl)lysine from octanoyl-[acyl-carrier-protein]: step 2/2. In terms of biological role, catalyzes the radical-mediated insertion of two sulfur atoms into the C-6 and C-8 positions of the octanoyl moiety bound to the lipoyl domains of lipoate-dependent enzymes, thereby converting the octanoylated domains into lipoylated derivatives. Together with LIP2 is essential for mitochondrial protein lipoylation during seed development. Required for the lipoylation of mitochondrial pyruvate dehydrogenase component E2 proteins in leaves and roots. The sequence is that of Lipoyl synthase, mitochondrial from Arabidopsis thaliana (Mouse-ear cress).